The following is a 109-amino-acid chain: MKRFPLFLLFTLLTLSTVPAQADIIDDTIGNIQQAINDAYNPDRGRDYEDSRDDGWQREVSDDRRRQYDDRRRQFEDRRRQLDDRQRQLDQERRQLEDEERRMEDEYGR.

The first 22 residues, 1–22 (MKRFPLFLLFTLLTLSTVPAQA), serve as a signal peptide directing secretion. Residues 39 to 109 (AYNPDRGRDY…ERRMEDEYGR (71 aa)) are disordered. Basic and acidic residues predominate over residues 41-109 (NPDRGRDYED…ERRMEDEYGR (69 aa)).

This is an uncharacterized protein from Escherichia coli O6:H1 (strain CFT073 / ATCC 700928 / UPEC).